A 316-amino-acid polypeptide reads, in one-letter code: MKALRIVFMGTPEFAVGILDAIAKQNKHEIVGVITAADKPAGRGQKIKYSAVKEYALKKELTLLQPTNLKDESFLLALKSLNANLHIVVAFRMLPKVVWAMPELGTFNLHASLLPNYRGAAPINWAIINGETKTGVTTFFIDDKIDTGAMILSKELEISESENLGDLHDKLMVLGCDAVLETLDKIAHGNVVTTIQEDTSDIKTAYKLDRDNCKIDFTKNITEVYNLIRGLSPYPSAWCNFRDADQEFSIKIYDTKQEVLLHDYTIGSVITTKKEIKIAVLGGFIQVLSLQFPGKKKMMAHELLNGLTFSEFAMVF.

Residue 112–115 (SLLP) participates in (6S)-5,6,7,8-tetrahydrofolate binding.

Belongs to the Fmt family.

The enzyme catalyses L-methionyl-tRNA(fMet) + (6R)-10-formyltetrahydrofolate = N-formyl-L-methionyl-tRNA(fMet) + (6S)-5,6,7,8-tetrahydrofolate + H(+). In terms of biological role, attaches a formyl group to the free amino group of methionyl-tRNA(fMet). The formyl group appears to play a dual role in the initiator identity of N-formylmethionyl-tRNA by promoting its recognition by IF2 and preventing the misappropriation of this tRNA by the elongation apparatus. In Flavobacterium psychrophilum (strain ATCC 49511 / DSM 21280 / CIP 103535 / JIP02/86), this protein is Methionyl-tRNA formyltransferase.